The sequence spans 102 residues: uncharacterized protein (102 aa).

The 55-residue stretch at 48–102 (LNDKRKSLGIELSMLELQTGVSISTLNRLFQDPSQVRFTTVFLVAQTLGVSLCAI) folds into the HTH cro/C1-type domain. Residues 59–78 (LSMLELQTGVSISTLNRLFQ) constitute a DNA-binding region (H-T-H motif).

This is an uncharacterized protein from Haemophilus influenzae (strain ATCC 51907 / DSM 11121 / KW20 / Rd).